The primary structure comprises 590 residues: Acyl-CoA ligase sidI (590 aa).

The short motif at 6–14 is the PTS2-type peroxisomal targeting signal element; that stretch reads RLQQTLSHL. ATP contacts are provided by residues 220–228, 359–364, Asp449, and Arg464; these read TSGSTGNPK and SSYGLT. Residue Thr364 coordinates substrate. CoA contacts are provided by residues 472–474 and 543–545; these read GGE and YFF. Lys563 lines the ATP pocket.

It belongs to the ATP-dependent AMP-binding enzyme family.

It is found in the peroxisome. The protein operates within siderophore biosynthesis. In terms of biological role, acyl-CoA ligase; part of the siderophore biosynthetic pathway. Aspergillus fumigatus produces 4 types of siderophores, low-molecular-mass iron chelators, including excreted fusarinine C (FsC) and triacetylfusarinine C (TAFC) for iron uptake and intacellular ferricrocin (FC) for hyphal and hydroxyferricrocin (HFC) for conidial iron distribution and storage. TAFC consists of 3 N(2)-acetyl-N(5)-anhydromevalonyl-N(5)-hydroxyornithine residues cyclically linked by ester bonds; FC is a cyclic hexapeptide with the structure Gly-Ser-Gly-(N(5)-acetyl-N(5)-hydroxyornithine)x3. The biosynthesis of all four siderophores depends on the hydroxylation of ornithine, catalyzed by the monooxygenase sidA. Subsequently, the pathways for biosynthesis of extra- and intracellular siderophores split. For biosynthesis of extracellular siderophores, the transacylase sidF transfers anhydromevalonyl to N(5)-hydroxyornithine. The required anhydromevalonyl-CoA moiety is derived from mevalonate by CoA ligation and dehydration catalyzed by sidI and sidH respectively. The acetylation of N(5)-hydroxyornithine for FC biosynthesis involves the constitutively expressed sidL. FC is hydroxylated to HFC by an as yet uncharacterized enzyme during conidiation. Assembly of fusarinine C (FsC) and FC is catalyzed by two different nonribosomal peptide synthetases (NRPS), sidD and sidC respectively. Subsequently, sidG catalyzes N2-acetylation of FsC for forming TAFC. Both extra- and intracellular siderophores are crucial for growth during iron limitation and virulence. This is Acyl-CoA ligase sidI from Aspergillus fumigatus (strain ATCC MYA-4609 / CBS 101355 / FGSC A1100 / Af293) (Neosartorya fumigata).